Here is an 88-residue protein sequence, read N- to C-terminus: Small cysteine-rich outer membrane protein OmcA (88 aa).

Positions 1–18 are cleaved as a signal peptide; sequence MKKTALLAALCSVVSLSS. Cysteine 19 carries N-palmitoyl cysteine lipidation. Residue cysteine 19 is the site of S-diacylglycerol cysteine attachment.

As to quaternary structure, part of a disulfide cross-linked outer membrane complex (COMC) composed of the major outer membrane porin (MOMP), the small cysteine-rich protein (OmcA) and the large cysteine-rich periplasmic protein (OmcB).

Its subcellular location is the cell outer membrane. Functionally, in elementary bodies (EBs, the infectious stage, which is able to survive outside the host cell) provides the structural integrity of the outer envelope through disulfide cross-links with the large cysteine-rich periplasmic protein and the major outer membrane porin. It has been described in publications as the Sarkosyl-insoluble COMC (Chlamydia outer membrane complex), and serves as the functional equivalent of peptidoglycan. This Chlamydia muridarum (strain MoPn / Nigg) protein is Small cysteine-rich outer membrane protein OmcA (omcA).